A 347-amino-acid chain; its full sequence is UDP-galactose/UDP-glucose transporter 5 (347 aa).

Transmembrane regions (helical) follow at residues 17 to 37 (LWKA…YGLL), 57 to 77 (LFLV…ALLA), 116 to 136 (VQTL…TLIM), 143 to 163 (FDYL…LFPA), 177 to 197 (TVWG…TSTF), 218 to 238 (ICSS…LPAV), 247 to 267 (CLFD…FISY), and 293 to 313 (CIWF…IVFG). The disordered stretch occupies residues 325–347 (SEKPPAAQELPRDEEAQPLKGNP).

This sequence belongs to the nucleotide-sugar transporter family. UDP-galactose:UMP antiporter (TC 2.A.7.11) subfamily.

Its subcellular location is the membrane. Functionally, sugar transporter involved in the transport of nucleotide-sugars from cytoplasm into the Golgi and/or the endoplasmic reticulum. In Arabidopsis thaliana (Mouse-ear cress), this protein is UDP-galactose/UDP-glucose transporter 5.